Here is a 181-residue protein sequence, read N- to C-terminus: CASP-like protein 2C1 (181 aa).

Residues 1–7 (MALEIPK) are Cytoplasmic-facing. The helical transmembrane segment at 8–28 (IEAILRGIAILLLVSTACLVG) threads the bilayer. The Extracellular segment spans residues 29–49 (LDSQTKFVIVYEKEVTYKDLH). The helical transmembrane segment at 50 to 70 (ALVVLVYVDAVAAAYNLLQLC) threads the bilayer. The Cytoplasmic portion of the chain corresponds to 71-98 (RCSVSALSKGNFKGSYRYLSWACFVLDQ). The chain crosses the membrane as a helical span at residues 99–119 (LAAYTTFAAHSAALQHSVLGI). The Extracellular portion of the chain corresponds to 120 to 140 (TGAKVFQWMKWCNRFTRFCFQ). Residues 141 to 161 (IGGALTCGYIASVLMVMISFI) traverse the membrane as a helical segment. At 162–181 (SAFNLFRLYSPKHFLRLKGT) the chain is on the cytoplasmic side.

The protein belongs to the Casparian strip membrane proteins (CASP) family. As to quaternary structure, homodimer and heterodimers.

The protein localises to the cell membrane. This chain is CASP-like protein 2C1, found in Populus trichocarpa (Western balsam poplar).